The sequence spans 599 residues: Elongation factor 4 (599 aa).

Positions 2 to 184 (KNIRNFSIIA…RLVRDIPPPE (183 aa)) constitute a tr-type G domain. Residues 14–19 (DHGKST) and 131–134 (NKID) each bind GTP.

This sequence belongs to the TRAFAC class translation factor GTPase superfamily. Classic translation factor GTPase family. LepA subfamily.

It localises to the cell inner membrane. It carries out the reaction GTP + H2O = GDP + phosphate + H(+). Required for accurate and efficient protein synthesis under certain stress conditions. May act as a fidelity factor of the translation reaction, by catalyzing a one-codon backward translocation of tRNAs on improperly translocated ribosomes. Back-translocation proceeds from a post-translocation (POST) complex to a pre-translocation (PRE) complex, thus giving elongation factor G a second chance to translocate the tRNAs correctly. Binds to ribosomes in a GTP-dependent manner. The sequence is that of Elongation factor 4 from Escherichia coli (strain SE11).